The primary structure comprises 810 residues: Transmembrane GTPase Marf (810 aa).

The Cytoplasmic segment spans residues 1 to 637 (MAAYLNRTIS…TTTPVEATPV (637 aa)). Position 8 is a phosphothreonine (Thr8). Positions 13 to 40 (TGQTGPADDDRHASSTDTVDKSGPGSPL) are disordered. Residues 20-32 (DDDRHASSTDTVD) are compositionally biased toward basic and acidic residues. Residue Ser38 is modified to Phosphoserine. In terms of domain architecture, Dynamin-type G spans 134-382 (QRDHMKVAFF…IRYFEFQDFE (249 aa)). The segment at 144-151 (GRTSNGKS) is G1 motif. 147 to 152 (SNGKSS) provides a ligand contact to GTP. The interval 170–171 (TT) is G2 motif. Residues 239–242 (DSPG) form a G3 motif region. 298–301 (NRWD) contributes to the GTP binding site. The interval 298–301 (NRWD) is G4 motif. Residue Lys327 is a region of interest, G5 motif. Ser345 contributes to the GTP binding site. Residues 427-476 (RNLKQDQKNLLTERIQGTETQMMQVTREMKMKIHNMVEEVEEKVSKALNE) are a coiled coil. Thr553 is modified (phosphothreonine). A Phosphoserine modification is found at Ser554. Residue Thr555 is modified to Phosphothreonine. The interval 609–630 (GQPALVNRQSSIGHSVSTPTTT) is disordered. The chain crosses the membrane as a helical span at residues 638–648 (CLLPAPVVAGI). Topologically, residues 649 to 668 (TPEQLSLISRFAVSSIGSQG) are mitochondrial intermembrane. The helical transmembrane segment at 669-689 (TVGGLVVAGVMLKTIGWRVLV) threads the bilayer. Residues 690–810 (GVGALYGCIY…IFEHNYISPQ (121 aa)) lie on the Cytoplasmic side of the membrane. Residues 759-806 (TATTDMNDELKTLDSQLNILEANQKQLKLLRNKANYIQNELDIFEHNY) are a coiled coil.

This sequence belongs to the TRAFAC class dynamin-like GTPase superfamily. Dynamin/Fzo/YdjA family. Mitofusin subfamily. In terms of assembly, interacts with Mul1. In terms of processing, ubiquitinated by park and Mul1. Ubiquitinated, probably by HUWE1, when dietary stearate (C18:0) levels are low; ubiquitination inhibits mitochondrial fusion. Widely expressed in embryos, accumulating in the mesoderm and endoderm during gut development. In the male germ line, it is expressed in spermatogonia, spermatocytes and early spermatids.

The protein localises to the mitochondrion outer membrane. It catalyses the reaction GTP + H2O = GDP + phosphate + H(+). Mitochondrial outer membrane GTPase that mediates mitochondrial clustering and fusion. Mitochondrial fusion is the physical merging of mitochondria that gives rise to mitochondrial networks, and this process is counterbalanced by mitochondrial fission which fragments networks. Promotes, but is not required for park recruitment to dysfunctional mitochondria. The protein is Transmembrane GTPase Marf (Marf) of Drosophila melanogaster (Fruit fly).